Here is a 467-residue protein sequence, read N- to C-terminus: Serine/threonine-protein phosphatase 2A 56 kDa regulatory subunit epsilon isoform (467 aa).

Residues 1–39 (MSSAPTTPPSVDKVDGFSRKSVRKARQKRSQSSSQFRSQ) are disordered. Serine 2 is subject to N-acetylserine. Threonine 7 carries the phosphothreonine modification. Positions 20-29 (KSVRKARQKR) are enriched in basic residues. Phosphoserine is present on residues serine 30, serine 32, and serine 34. Positions 30–39 (SQSSSQFRSQ) are enriched in low complexity.

This sequence belongs to the phosphatase 2A regulatory subunit B56 family. As to quaternary structure, PP2A consists of a common heterodimeric core enzyme, composed of a 36 kDa catalytic subunit (subunit C) and a 65 kDa constant regulatory subunit (PR65 or subunit A), that associates with a variety of regulatory subunits. Proteins that associate with the core dimer include three families of regulatory subunits B (the R2/B/PR55/B55, R3/B''/PR72/PR130/PR59 and R5/B'/B56 families), the 48 kDa variable regulatory subunit, viral proteins, and cell signaling molecules. Interacts with SGO1. Found in a complex with at least ARL2, PPP2CB; PPP2R1A, PPP2R2A, PPP2R5E and TBCD.

Its subcellular location is the cytoplasm. Functionally, the B regulatory subunit might modulate substrate selectivity and catalytic activity, and might also direct the localization of the catalytic enzyme to a particular subcellular compartment. Interacts with cyclin G in vitro. The polypeptide is Serine/threonine-protein phosphatase 2A 56 kDa regulatory subunit epsilon isoform (Ppp2r5e) (Mus musculus (Mouse)).